The chain runs to 37 residues: Serrulin (37 aa).

Residues 16 to 37 (FGGGGIGGGGFGGGYGGGKIKG) are disordered. Lysine 36 carries the lysine amide modification.

In terms of tissue distribution, expressed in hemocytes (at protein level).

It is found in the secreted. Antimicrobial protein with activity against Gram-positive and Gram-negative bacteria, filamentous fungus, and yeast. Was tested against Micrococcus luteus A270 (MIC=0.5-1 uM), Echerichia coli SBS 363 (MIC=9-16 uM), Pseudomonas aeruginosa (MIC=0.01-0.3 uM), Aspergillus niger (MIC=3-6 uM), and Candida albicans MDM8 (MIC=1.5-3 uM). Has no hemolytic activity against human erythrocytes. In Tityus serrulatus (Brazilian scorpion), this protein is Serrulin.